The following is a 72-amino-acid chain: MDGYQLTFSNNKRSDKSIVSEKLQRDCDPPITQKYFWSSGGHTFHFRAAAAEKNVTPFSTKMQGKYIKKKAM.

This is an uncharacterized protein from Saccharomyces cerevisiae (strain ATCC 204508 / S288c) (Baker's yeast).